The chain runs to 154 residues: Protein X (154 aa).

A disordered region spans residues 26-45; sequence RGRPVSGPLGSLSSSSPSAV. Positions 31–43 are enriched in low complexity; the sequence is SGPLGSLSSSSPS. The tract at residues 68 to 117 is mitochondrial targeting sequence; that stretch reads PCALRFTSARRMETTVNAHQILPKILHKRTLGLSTMSTTDLEAYFKDCLF.

The protein belongs to the orthohepadnavirus protein X family. In terms of assembly, may form homodimer. May interact with host CEBPA, CFLAR, CREB1, DDB1, E4F1, HBXIP, HSPD1/HSP60, NFKBIA, POLR2E and SMAD4. Interacts with host SMC5-SMC6 complex and induces its degradation. Interacts with host TRPC4AP; leading to prevent ubiquitination of TRPC4AP. Interacts with host PLSCR1; this interaction promotes ubiquitination and degradation of HBx and impairs HBx-mediated cell proliferation. Post-translationally, a fraction may be phosphorylated in insect cells and HepG2 cells, a human hepatoblastoma cell line. Phosphorylated in vitro by host protein kinase C or mitogen-activated protein kinase. N-acetylated in insect cells.

Its subcellular location is the host cytoplasm. The protein resides in the host nucleus. It localises to the host mitochondrion. Its function is as follows. Multifunctional protein that plays a role in silencing host antiviral defenses and promoting viral transcription. Does not seem to be essential for HBV infection. May be directly involved in development of cirrhosis and liver cancer (hepatocellular carcinoma). Most of cytosolic activities involve modulation of cytosolic calcium. The effect on apoptosis is controversial depending on the cell types in which the studies have been conducted. May induce apoptosis by localizing in mitochondria and causing loss of mitochondrial membrane potential. May also modulate apoptosis by binding host CFLAR, a key regulator of the death-inducing signaling complex (DISC). Promotes viral transcription by using the host E3 ubiquitin ligase DDB1 to target the SMC5-SMC6 complex to proteasomal degradation. This host complex would otherwise bind to viral episomal DNA, and prevents its transcription. Moderately stimulates transcription of many different viral and cellular transcription elements. Promoters and enhancers stimulated by HBx contain DNA binding sites for NF-kappa-B, AP-1, AP-2, c-EBP, ATF/CREB, or the calcium-activated factor NF-AT. This is Protein X from Hepatitis B virus genotype D subtype ayw (isolate Japan/JYW796/1988) (HBV-D).